The sequence spans 291 residues: Methyl-CpG-binding domain protein 3 (291 aa).

Positions 1-72 (MERKRWECPA…DFRTGKMLMS (72 aa)) constitute an MBD domain. A required for interaction with MBD2 region spans residues 1 to 80 (MERKRWECPA…MSKMNKSRQR (80 aa)). Residue serine 56 is modified to Phosphoserine. Residues 60 to 80 (STFDFRTGKMLMSKMNKSRQR) form a required for interaction with MBD3L2 region. A Glycyl lysine isopeptide (Lys-Gly) (interchain with G-Cter in SUMO2) cross-link involves residue lysine 73. Serine 85 carries the post-translational modification Phosphoserine. Glycyl lysine isopeptide (Lys-Gly) (interchain with G-Cter in SUMO2) cross-links involve residues lysine 90 and lysine 92. The residue at position 144 (serine 144) is a Phosphoserine. The stretch at 216 to 245 (KAFMVTDEDIRKQEELVQQVRKRLEEALMA) forms a coiled coil. A compositionally biased stretch (basic and acidic residues) spans 254-267 (LARDGEAPLDKACA). Residues 254–291 (LARDGEAPLDKACAEDDDEEDEEEEEEEPDPDPEMEHV) are disordered. Positions 268 to 291 (EDDDEEDEEEEEEEPDPDPEMEHV) are enriched in acidic residues.

Heterodimer (via N-terminus) with MBD2. Component of the MeCP1 histone deacetylase complex. Component of the nucleosome remodeling and deacetylase (NuRD) repressor complex, composed of core proteins MTA1, MTA2, MTA3, RBBP4, RBBP7, HDAC1, HDAC2, MBD2, MBD3, and peripherally associated proteins CDK2AP1, CDK2AP2, GATAD2A, GATAD2B, CHD3, CHD4 and CHD5. The exact stoichiometry of the NuRD complex is unknown, and some subunits such as MBD2 and MBD3, GATAD2A and GATAD2B, and CHD3, CHD4 and CHD5 define mutually exclusive NuRD complexes. Interacts with MBD3L2 (via N-terminus); the interaction is direct. Interacts with BCL6. Interacts with CDK2AP1. Interacts with HDAC1. Interacts with MTA2. Interacts with DNMT1. Interacts with GATAD2A. Interacts with GATAD2B. Does not interact with PWWP2A. Does not interact with PWWP2B.

It localises to the nucleus. The protein resides in the chromosome. In terms of biological role, acts as a component of the histone deacetylase NuRD complex which participates in the remodeling of chromatin. Acts as transcriptional repressor and plays a role in gene silencing. Does not bind to methylated DNA by itself. Binds to a lesser degree DNA containing unmethylated CpG dinucleotides. Recruits histone deacetylases and DNA methyltransferases. The sequence is that of Methyl-CpG-binding domain protein 3 (MBD3) from Homo sapiens (Human).